The sequence spans 335 residues: DNA-directed RNA polymerase subunit alpha (335 aa).

An alpha N-terminal domain (alpha-NTD) region spans residues 1-233 (MTAVNDFLTP…QQIAVFVDLE (233 aa)). An alpha C-terminal domain (alpha-CTD) region spans residues 247–335 (IDPILLRPVD…DDDRLNAKLR (89 aa)).

The protein belongs to the RNA polymerase alpha chain family. In terms of assembly, homodimer. The RNAP catalytic core consists of 2 alpha, 1 beta, 1 beta' and 1 omega subunit. When a sigma factor is associated with the core the holoenzyme is formed, which can initiate transcription.

The enzyme catalyses RNA(n) + a ribonucleoside 5'-triphosphate = RNA(n+1) + diphosphate. Its function is as follows. DNA-dependent RNA polymerase catalyzes the transcription of DNA into RNA using the four ribonucleoside triphosphates as substrates. This is DNA-directed RNA polymerase subunit alpha from Alcanivorax borkumensis (strain ATCC 700651 / DSM 11573 / NCIMB 13689 / SK2).